A 310-amino-acid polypeptide reads, in one-letter code: 2-ketogluconate reductase (310 aa).

Residues 151–152 and 227–229 each bind NADP(+); these read HI and IAR. Residues R229 and E258 contribute to the active site. Residue H276 is the Proton donor of the active site.

It belongs to the D-isomer specific 2-hydroxyacid dehydrogenase family. In terms of assembly, homohexamer.

The enzyme catalyses D-gluconate + NADP(+) = 2-dehydro-D-gluconate + NADPH + H(+). Functionally, catalyzes the reduction of 2-keto-D-gluconate to gluconate. Can also catalyze the reduction of 2-keto-L-gulonate. Can use both NADH and NADPH efficiently, with a slight preference for NADPH. The polypeptide is 2-ketogluconate reductase (Gluconobacter oxydans (strain 621H) (Gluconobacter suboxydans)).